Reading from the N-terminus, the 1782-residue chain is Signal-induced proliferation-associated 1-like protein 1 (1782 aa).

Disordered stretches follow at residues 1–28 (MTSLKRSQTERPVTADRASVVSTDGAPK), 47–125 (GSSV…VSLN), and 140–171 (KNKTGPAESMDSRFLMPEAYPSSPRKALRRIR). The span at 84-94 (PPRKENVKESS) shows a compositional bias: basic and acidic residues. The segment covering 95-125 (RSSQEIETSSCLESLSSKGSPVSQGSSVSLN) has biased composition (low complexity). Residues serine 162, serine 187, serine 193, serine 208, serine 255, and serine 288 each carry the phosphoserine modification. The disordered stretch occupies residues 277 to 297 (EREKPLKRRSKSETGDSSIFR). One can recognise a Rap-GAP domain in the interval 599 to 816 (LMKLDEQGLN…RTRQEYLKDL (218 aa)). Residues 953–1031 (EMTLRRNGLG…VVIIPPHDDC (79 aa)) enclose the PDZ domain. 2 disordered regions span residues 1069-1128 (QRNA…RLSP) and 1144-1213 (SQCR…SLAD). Phosphoserine occurs at positions 1078, 1087, 1116, 1127, 1149, 1170, and 1181. Over residues 1080-1093 (QVPSQLQSPMTSRL) the composition is skewed to polar residues. The span at 1149 to 1159 (SPSNLSSSSET) shows a compositional bias: low complexity. The span at 1186–1205 (DRQNTQSDISGSGKSTPSWQ) shows a compositional bias: polar residues. Serine 1234 and serine 1249 each carry phosphoserine. Residues 1247-1285 (HLSPNKQGHSDSHYSSHSSSNTLSSNASSAHSDEKWYDG) are disordered. The span at 1261 to 1276 (SSHSSSNTLSSNASSA) shows a compositional bias: low complexity. Serine 1305 carries the phosphoserine; by PLK2 modification. The disordered stretch occupies residues 1307–1342 (IDTASYGPSHGSTASLGASTSSPRSGPGKEKVAPLW). Position 1309 is a phosphothreonine; by PLK2 (threonine 1309). A compositionally biased stretch (low complexity) spans 1315–1328 (SHGSTASLGASTSS). Serine 1328 bears the Phosphoserine; by CDK5 mark. Serine 1345 is subject to Phosphoserine. The segment covering 1358–1368 (TEGHGMDRKAE) has biased composition (basic and acidic residues). The tract at residues 1358 to 1454 (TEGHGMDRKA…SSSGPRTFYP (97 aa)) is disordered. Phosphoserine occurs at positions 1369, 1370, 1391, 1410, and 1412. Positions 1378 to 1410 (KSQGGSSPLSRENSTFSINDAASHTSTMSSRHS) are enriched in polar residues. Residues 1432–1447 (SSQLAPSFSSSSSSSS) show a composition bias toward low complexity. Residues serine 1507 and serine 1528 each carry the phosphoserine modification. Threonine 1530 bears the Phosphothreonine mark. Phosphoserine occurs at positions 1533, 1544, 1547, 1564, and 1567. An Asymmetric dimethylarginine modification is found at arginine 1580. Residues serine 1582, serine 1624, serine 1626, serine 1629, serine 1687, serine 1690, serine 1707, serine 1708, and serine 1712 each carry the phosphoserine modification. The tract at residues 1625 to 1647 (ASDSSLTDIQETRRQPIPDPGLM) is disordered. Residues 1713–1773 (PTLASKVDQL…ASDKLKKFTE (61 aa)) are a coiled coil.

Interacts with DLG4, PDLIM5, PDLIM7 and LZTS3. Interacts with the actin cytoskeleton. Interacts (via PDZ domain) with EPHA4 (via PDZ motif); controls neuronal morphology through regulation of the RAP1 (RAP1A or RAP1B) and RAP2 (RAP2A, RAP2B or RAP2C) GTPases. In terms of processing, ubiquitinated and degraded by the SCF(BTRC) following phosphorylation by PLK2. Post-translationally, phosphorylated at Ser-1328 by CDK5, creating a docking site for the POLO box domains of PLK2. Subsequently, PLK2 binds and phosphorylates SIPA1L1, leading to ubiquitination and degradation by the proteasome.

The protein localises to the cytoplasm. It localises to the cytoskeleton. The protein resides in the postsynaptic density. It is found in the synapse. Its subcellular location is the synaptosome. Stimulates the GTPase activity of RAP2A. Promotes reorganization of the actin cytoskeleton and recruits DLG4 to F-actin. Contributes to the regulation of dendritic spine morphogenesis. This chain is Signal-induced proliferation-associated 1-like protein 1 (Sipa1l1), found in Mus musculus (Mouse).